A 139-amino-acid chain; its full sequence is Antitoxin HicB 2 (139 aa).

In terms of domain architecture, HTH cro/C1-type spans 87–137; the sequence is MLQTRTSNAELARLLGTRPQEIQRIVSLSHSTKIDTIANALNALGKHLELV. A DNA-binding region (H-T-H motif) is located at residues 96 to 113; sequence ELARLLGTRPQEIQRIVS.

Belongs to the HicB antitoxin family. As to quaternary structure, probably forms a complex with the probable mRNA interferase HicA2 (its cognate toxin); when complexed with HicA inhibits the toxin activity.

Functionally, antitoxin component of a type II toxin-antitoxin (TA) system. Functions as an mRNA interferase antitoxin preventing effects of the HicA 2 toxin. This is Antitoxin HicB 2 (hicB2) from Photorhabdus laumondii subsp. laumondii (strain DSM 15139 / CIP 105565 / TT01) (Photorhabdus luminescens subsp. laumondii).